The chain runs to 362 residues: Chorismate synthase (362 aa).

Residue R47 coordinates NADP(+). FMN contacts are provided by residues 124-126 (RSS), G286, 301-305 (KPTAT), and R327.

Belongs to the chorismate synthase family. In terms of assembly, homotetramer. Requires FMNH2 as cofactor.

It carries out the reaction 5-O-(1-carboxyvinyl)-3-phosphoshikimate = chorismate + phosphate. Its pathway is metabolic intermediate biosynthesis; chorismate biosynthesis; chorismate from D-erythrose 4-phosphate and phosphoenolpyruvate: step 7/7. Its function is as follows. Catalyzes the anti-1,4-elimination of the C-3 phosphate and the C-6 proR hydrogen from 5-enolpyruvylshikimate-3-phosphate (EPSP) to yield chorismate, which is the branch point compound that serves as the starting substrate for the three terminal pathways of aromatic amino acid biosynthesis. This reaction introduces a second double bond into the aromatic ring system. The chain is Chorismate synthase from Synechocystis sp. (strain ATCC 27184 / PCC 6803 / Kazusa).